The primary structure comprises 139 residues: Ribonuclease homolog (139 aa).

The first 23 residues, 1-23, serve as a signal peptide directing secretion; the sequence is MAMSSLWWTAILLLALTVSMCYG. The active-site Proton acceptor is the histidine 34. 3 cysteine pairs are disulfide-bonded: cysteine 49–cysteine 102, cysteine 64–cysteine 111, and cysteine 82–cysteine 126. Residue 65 to 69 participates in substrate binding; sequence KSFNT. Histidine 133 serves as the catalytic Proton donor.

This sequence belongs to the pancreatic ribonuclease family.

Its subcellular location is the secreted. In Gallus gallus (Chicken), this protein is Ribonuclease homolog.